Consider the following 236-residue polypeptide: GCN5-related N-acetyltransferase 8 (236 aa).

Residues 96–235 (ATITSSPSPD…DALEAFDQVN (140 aa)) enclose the N-acetyltransferase domain. Acetyl-CoA contacts are provided by residues 161–163 (IFV), 169–174 (RKGFGS), 200–202 (NVN), and Tyr-207. Tyr-207 functions as the Proton donor in the catalytic mechanism.

This sequence belongs to the acetyltransferase family. GNAT subfamily. Oligomer. In terms of tissue distribution, expressed throughout the plant.

Its subcellular location is the cytoplasm. The protein resides in the nucleus. The catalysed reaction is an N-terminal L-alpha-aminoacyl-[protein] + acetyl-CoA = N-terminal N(alpha)-acetyl-L-alpha-aminoacyl-[protein] + CoA + H(+). It catalyses the reaction L-lysyl-[protein] + acetyl-CoA = N(6)-acetyl-L-lysyl-[protein] + CoA + H(+). Functionally, probable protein acetyltransferase with dual specificity triggering both N-alpha-acetylation (NTA) and epsilon-lysine acetylation (KA). The sequence is that of GCN5-related N-acetyltransferase 8 from Arabidopsis thaliana (Mouse-ear cress).